Here is a 1058-residue protein sequence, read N- to C-terminus: Vacuolar protein sorting-associated protein 54 (1058 aa).

Residues 369 to 389 (SKKIVEVHERYEQKKKLLAKL) are a coiled coil.

This sequence belongs to the VPS54 family. In terms of assembly, component of the Golgi-associated retrograde protein (GARP) complex, also called VFT (VPS fifty-three) complex, composed of vps-51, vps-52, vps-53 and vps-54. Within the complex interacts with vps-52 and vps-53.

Its subcellular location is the golgi apparatus. It is found in the trans-Golgi network. In terms of biological role, acts as a component of the GARP complex that is involved in retrograde transport from early and late endosomes to the trans-Golgi network (TGN). The GARP complex facilitates tethering as well as SNARE complex assembly at the Golgi. This Caenorhabditis elegans protein is Vacuolar protein sorting-associated protein 54.